The chain runs to 611 residues: Chaperone protein DnaK (611 aa).

Thr-173 carries the post-translational modification Phosphothreonine; by autocatalysis. Residues 579 to 592 show a composition bias toward low complexity; it reads AAGQAEGAQGAQDA. Residues 579 to 598 are disordered; it reads AAGQAEGAQGAQDAGAKKDN.

Belongs to the heat shock protein 70 family.

In terms of biological role, acts as a chaperone. The chain is Chaperone protein DnaK from Bacillus cereus (strain AH187).